The sequence spans 123 residues: MAKLTKESFISSLKEMSIKEVMELVEAMKEEFGIDPSAVAVAAAAPAAEAEEKKSTLSVILKSDNGKKLAIVKAVKELLNLALMDANKLVSTLPATLKENIPAAEAEALKAKLVEAGADVELK.

This sequence belongs to the bacterial ribosomal protein bL12 family. As to quaternary structure, homodimer. Part of the ribosomal stalk of the 50S ribosomal subunit. Forms a multimeric L10(L12)X complex, where L10 forms an elongated spine to which 2 to 4 L12 dimers bind in a sequential fashion. Binds GTP-bound translation factors.

Functionally, forms part of the ribosomal stalk which helps the ribosome interact with GTP-bound translation factors. Is thus essential for accurate translation. The sequence is that of Large ribosomal subunit protein bL12 from Mycoplasmopsis agalactiae (strain NCTC 10123 / CIP 59.7 / PG2) (Mycoplasma agalactiae).